A 226-amino-acid chain; its full sequence is Thioredoxin domain-containing protein 9 (226 aa).

One can recognise a Thioredoxin domain in the interval E75–G180. 3 positions are modified to phosphoserine: S188, S221, and S223.

Forms ternary complexes with the chaperonin TCP1 complex, spanning the cylindrical chaperonin cavity and contacting at least 2 subunits.

Its subcellular location is the cytoplasm. It localises to the nucleus. The protein resides in the cytoskeleton. It is found in the microtubule organizing center. The protein localises to the centrosome. Its subcellular location is the midbody. In terms of biological role, significantly diminishes the chaperonin TCP1 complex ATPase activity, thus negatively impacts protein folding, including that of actin or tubulin. In Rattus norvegicus (Rat), this protein is Thioredoxin domain-containing protein 9 (Txndc9).